Reading from the N-terminus, the 256-residue chain is GTP cyclohydrolase FolE2 (256 aa).

Belongs to the GTP cyclohydrolase IV family.

It carries out the reaction GTP + H2O = 7,8-dihydroneopterin 3'-triphosphate + formate + H(+). Its pathway is cofactor biosynthesis; 7,8-dihydroneopterin triphosphate biosynthesis; 7,8-dihydroneopterin triphosphate from GTP: step 1/1. In terms of biological role, converts GTP to 7,8-dihydroneopterin triphosphate. The protein is GTP cyclohydrolase FolE2 of Caldicellulosiruptor bescii (strain ATCC BAA-1888 / DSM 6725 / KCTC 15123 / Z-1320) (Anaerocellum thermophilum).